The chain runs to 145 residues: Maximins 5/H4 type 1 (145 aa).

A signal peptide spans 1-18; the sequence is MNFKYIVAVSFLIASAYA. 2 consecutive propeptides follow at residues 19–43 and 74–124; these read RSVQNDEQSLSQRDVLEEESLREIR and TAEE…KEKR. A Leucine amide modification is found at L144.

It belongs to the bombinin family. In terms of tissue distribution, expressed by the skin glands.

The protein localises to the secreted. Its function is as follows. Maximin-5 shows antibacterial activity against both Gram-positive and Gram-negative bacteria. The only exception is the resistance of E.coli. Also shows antimicrobial activity against fungi C.albicans, A.flavus and P.uticale. It has little hemolytic activity. It does not possess a significant cytotoxicity against tumor cell lines. It does not possess a significant anti-HIV activity. Maximin-H4 shows antibacterial activity against both Gram-positive and Gram-negative bacteria. It also shows antimicrobial activity against the fungus C.albicans. Shows strong hemolytic activity. This is Maximins 5/H4 type 1 from Bombina maxima (Giant fire-bellied toad).